Here is a 362-residue protein sequence, read N- to C-terminus: Phosphoserine aminotransferase (362 aa).

R42 contacts L-glutamate. Pyridoxal 5'-phosphate contacts are provided by residues 76-77 (AR), W102, T153, D174, and Q197. The residue at position 198 (K198) is an N6-(pyridoxal phosphate)lysine. 239–240 (NT) provides a ligand contact to pyridoxal 5'-phosphate.

This sequence belongs to the class-V pyridoxal-phosphate-dependent aminotransferase family. SerC subfamily. Homodimer. Requires pyridoxal 5'-phosphate as cofactor.

It localises to the cytoplasm. It carries out the reaction O-phospho-L-serine + 2-oxoglutarate = 3-phosphooxypyruvate + L-glutamate. The catalysed reaction is 4-(phosphooxy)-L-threonine + 2-oxoglutarate = (R)-3-hydroxy-2-oxo-4-phosphooxybutanoate + L-glutamate. Its pathway is amino-acid biosynthesis; L-serine biosynthesis; L-serine from 3-phospho-D-glycerate: step 2/3. It functions in the pathway cofactor biosynthesis; pyridoxine 5'-phosphate biosynthesis; pyridoxine 5'-phosphate from D-erythrose 4-phosphate: step 3/5. In terms of biological role, catalyzes the reversible conversion of 3-phosphohydroxypyruvate to phosphoserine and of 3-hydroxy-2-oxo-4-phosphonooxybutanoate to phosphohydroxythreonine. This Proteus mirabilis (strain HI4320) protein is Phosphoserine aminotransferase.